We begin with the raw amino-acid sequence, 167 residues long: Transmembrane protein 229B (167 aa).

At 1–14 the chain is on the cytoplasmic side; sequence MASAEPLTALSRWY. Residues 15 to 35 traverse the membrane as a helical segment; it reads LYAIHGYFCEVMFTAAWEFVV. Over 36–40 the chain is Extracellular; it reads NLNWK. Residues 41–61 traverse the membrane as a helical segment; it reads FPGVTSVWALFIYGTSILIVE. The Cytoplasmic portion of the chain corresponds to 62-73; sequence RMYLRLRGRCPL. Residues 74–94 traverse the membrane as a helical segment; sequence LLRCLIYTLWTYLWEFTTGFI. The Extracellular segment spans residues 95–109; that stretch reads LRQFNACPWDYSQFD. The helical transmembrane segment at 110 to 130 threads the bilayer; it reads FDFMGLITLEYAVPWFCGALI. The Cytoplasmic segment spans residues 131 to 167; the sequence is MEQFIIRNTLRLRFDKDAEPGEPSGALALANGHVKTD.

Belongs to the TMEM229 family.

Its subcellular location is the membrane. This is Transmembrane protein 229B (TMEM229B) from Homo sapiens (Human).